A 438-amino-acid chain; its full sequence is UPF0229 protein R01398 (438 aa).

Residues 55–107 form a disordered region; sequence PARGVNEPAFQPDSNSGERRHVLPGNREFAAGDRIPKRGSGGGAGNAGAGTGQ. Over residues 93–105 the composition is skewed to gly residues; it reads GSGGGAGNAGAGT.

It belongs to the UPF0229 family.

This Rhizobium meliloti (strain 1021) (Ensifer meliloti) protein is UPF0229 protein R01398.